A 680-amino-acid polypeptide reads, in one-letter code: ATPase family AAA domain-containing protein FIGL1 (680 aa).

3 disordered regions span residues 214–234 (YGNS…NQDR), 250–275 (FGTK…GAPN), and 288–352 (VRQK…GGKT). A compositionally biased stretch (polar residues) spans 295–308 (TESPSSCLSPQSDK). The span at 313 to 323 (RGYGSRSGGLR) shows a compositional bias: gly residues. The segment covering 336–346 (TNGNNVGNLTS) has biased composition (polar residues). ATP is bound by residues A406 and 446–451 (GTGKTM).

This sequence belongs to the AAA ATPase family. Requires Mg(2+) as cofactor.

It localises to the nucleus. The enzyme catalyses ATP + H2O = ADP + phosphate + H(+). Its function is as follows. Involved in DNA double-strand break (DBS) repair via homologous recombination (HR). Limits class II meiotic crossover (CO) formation by regulating the invasion step of meiotic HR. May counteract DMC1 and RAD51-mediated inter-homolog strand invasion to limit CO formation. Functions independently of FANCM. This Arabidopsis thaliana (Mouse-ear cress) protein is ATPase family AAA domain-containing protein FIGL1.